The following is a 2263-amino-acid chain: Collagen alpha-6(VI) chain (2263 aa).

A signal peptide spans 1-19; sequence MMLLILFLVIICSHISVNQ. The interval 20–1391 is nonhelical region; sequence DSGPEYADVV…TCCCLFCKCI (1372 aa). VWFA domains are found at residues 27–206, 229–411, 436–606, 622–791, and 809–982; these read DVVF…IKDV, DVVF…RNQI, DIYL…RNQV, DIMF…EDDL, and DVVF…FSDV. N-linked (GlcNAc...) asparagine glycosylation is found at Asn-198, Asn-275, Asn-288, Asn-347, and Asn-520. N-linked (GlcNAc...) asparagine glycosylation is found at Asn-930 and Asn-988. 2 VWFA domains span residues 1000 to 1171 and 1187 to 1371; these read DLVF…NKRI and DVVV…GSRL. Asn-1290 is a glycosylation site (N-linked (GlcNAc...) asparagine). The interval 1392–1725 is triple-helical region; sequence GGDGTMGDPG…GRKGVKGAKG (334 aa). Residues 1397-1723 form a disordered region; the sequence is MGDPGPPGKR…PPGRKGVKGA (327 aa). Basic and acidic residues predominate over residues 1498 to 1508; it reads TPGDRGAKGLR. A Cell attachment site motif is present at residues 1508–1510; it reads RGD. Residues 1547 to 1559 show a composition bias toward basic residues; that stretch reads SRRKTAAHGRRGH. Positions 1680-1689 are enriched in gly residues; the sequence is GDPGGPGETG. Residues 1726–2263 are nonhelical region; it reads LASFSTCELI…MIESAPKQHD (538 aa). 2 consecutive VWFA domains span residues 1757–1937 and 1965–2166; these read ELVF…ERLQ and DAAF…INSI.

It belongs to the type VI collagen family. In terms of assembly, trimers composed of three different chains: alpha-1(VI), alpha-2(VI), and alpha-3(VI) or alpha-5(VI) or alpha-6(VI). In terms of processing, prolines at the third position of the tripeptide repeating unit (G-X-Y) are hydroxylated in some or all of the chains.

The protein resides in the secreted. It is found in the extracellular space. The protein localises to the extracellular matrix. Collagen VI acts as a cell-binding protein. The sequence is that of Collagen alpha-6(VI) chain (COL6A6) from Homo sapiens (Human).